Consider the following 289-residue polypeptide: Phycobilisome 39 kDa linker polypeptide, phycocyanin-associated, rod (289 aa).

The 179-residue stretch at 2 to 180 (PITSAASRLG…LYRGYANSDR (179 aa)) folds into the PBS-linker domain. Positions 213–233 (SYLPSKQGTAPSRTFGRSSQG) are disordered. Over residues 216-233 (PSKQGTAPSRTFGRSSQG) the composition is skewed to polar residues. Positions 236 to 288 (PRLYRIEVTGISLPRYPKVRRSNKEFIVPYEQLSSTLQQINKLGGKVASITFA) constitute a CpcD-like domain.

It belongs to the phycobilisome linker protein family.

Its subcellular location is the cellular thylakoid membrane. Rod linker protein, associated with phycocyanin. Linker polypeptides determine the state of aggregation and the location of the disk-shaped phycobiliprotein units within the phycobilisome and modulate their spectroscopic properties in order to mediate a directed and optimal energy transfer. The chain is Phycobilisome 39 kDa linker polypeptide, phycocyanin-associated, rod (cpcI2) from Microchaete diplosiphon (Fremyella diplosiphon).